A 166-amino-acid chain; its full sequence is Seed allergenic protein RAG2 (166 aa).

The signal sequence occupies residues 1-26 (MASNKVVFSALLLIIVSVLAATATMA). 5 disulfides stabilise this stretch: Cys41-Cys93, Cys55-Cys81, Cys63-Cys125, Cys82-Cys141, and Cys95-Cys153. Asn147 carries N-linked (GlcNAc...) asparagine glycosylation.

Belongs to the cereal trypsin/alpha-amylase inhibitor family. In terms of processing, five disulfide bonds are present.

It localises to the secreted. Its function is as follows. Seed storage protein. This chain is Seed allergenic protein RAG2 (RAG2), found in Oryza sativa subsp. japonica (Rice).